A 361-amino-acid chain; its full sequence is tRNA/tmRNA (uracil-C(5))-methyltransferase (361 aa).

Residues glutamine 183, tyrosine 211, asparagine 216, glutamate 232, and aspartate 294 each contribute to the S-adenosyl-L-methionine site. Cysteine 319 serves as the catalytic Nucleophile. The active-site Proton acceptor is glutamate 353.

Belongs to the class I-like SAM-binding methyltransferase superfamily. RNA M5U methyltransferase family. TrmA subfamily.

It catalyses the reaction uridine(54) in tRNA + S-adenosyl-L-methionine = 5-methyluridine(54) in tRNA + S-adenosyl-L-homocysteine + H(+). The catalysed reaction is uridine(341) in tmRNA + S-adenosyl-L-methionine = 5-methyluridine(341) in tmRNA + S-adenosyl-L-homocysteine + H(+). Its function is as follows. Dual-specificity methyltransferase that catalyzes the formation of 5-methyluridine at position 54 (m5U54) in all tRNAs, and that of position 341 (m5U341) in tmRNA (transfer-mRNA). The protein is tRNA/tmRNA (uracil-C(5))-methyltransferase of Acinetobacter baumannii (strain AB307-0294).